A 206-amino-acid chain; its full sequence is MTDTPTKQEIQSKNDNVPAATPVEQKKNNRNDRKRNRRGDSKNLERDSDWQERVVQIRRVSKTVKGGKKMSFRAIVVVGNEKGQVGVGVGKAGDVIGAVRKGVSDGKKNLVRVPLTPNNSIPTLSLGSDGAANVLIRPAAPGTGVIAGGSIRTVLELAGIKNVLAKRLGSKTPLNNARAAMVALSQLRTHKSVSRERGISLEQLYS.

Positions 1 to 15 (MTDTPTKQEIQSKND) are enriched in polar residues. The interval 1–50 (MTDTPTKQEIQSKNDNVPAATPVEQKKNNRNDRKRNRRGDSKNLERDSDW) is disordered. The span at 38 to 50 (RGDSKNLERDSDW) shows a compositional bias: basic and acidic residues. In terms of domain architecture, S5 DRBM spans 50–113 (WQERVVQIRR…SDGKKNLVRV (64 aa)).

Belongs to the universal ribosomal protein uS5 family. As to quaternary structure, part of the 30S ribosomal subunit. Contacts proteins S4 and S8.

In terms of biological role, with S4 and S12 plays an important role in translational accuracy. Located at the back of the 30S subunit body where it stabilizes the conformation of the head with respect to the body. The chain is Small ribosomal subunit protein uS5 from Prochlorococcus marinus (strain AS9601).